The sequence spans 85 residues: RNA-binding protein Hfq (85 aa).

The region spanning 9–68 is the Sm domain; sequence DPFLNELRKEKVPVSVFLVNGIKLHGIIDSFDQYVVMLKNSITQMVYKHAISTVVPSRMV.

The protein belongs to the Hfq family. Homohexamer.

Its function is as follows. RNA chaperone that binds small regulatory RNA (sRNAs) and mRNAs to facilitate mRNA translational regulation in response to envelope stress, environmental stress and changes in metabolite concentrations. Also binds with high specificity to tRNAs. In Legionella pneumophila (strain Paris), this protein is RNA-binding protein Hfq.